A 268-amino-acid polypeptide reads, in one-letter code: uncharacterized protein (268 aa).

It to yeast YKR075c.

This is an uncharacterized protein from Saccharomyces cerevisiae (strain ATCC 204508 / S288c) (Baker's yeast).